The chain runs to 354 residues: Uroporphyrinogen decarboxylase (354 aa).

Substrate is bound by residues 27–31, Asp77, Tyr154, Thr209, and His327; that span reads RQAGR.

It belongs to the uroporphyrinogen decarboxylase family. Homodimer.

The protein resides in the cytoplasm. It carries out the reaction uroporphyrinogen III + 4 H(+) = coproporphyrinogen III + 4 CO2. It functions in the pathway porphyrin-containing compound metabolism; protoporphyrin-IX biosynthesis; coproporphyrinogen-III from 5-aminolevulinate: step 4/4. Its function is as follows. Catalyzes the decarboxylation of four acetate groups of uroporphyrinogen-III to yield coproporphyrinogen-III. In Histophilus somni (strain 129Pt) (Haemophilus somnus), this protein is Uroporphyrinogen decarboxylase.